The following is a 115-amino-acid chain: Cytochrome c oxidase assembly protein COX16 homolog, mitochondrial (115 aa).

The Mitochondrial matrix portion of the chain corresponds to Met1 to Phe6. A helical transmembrane segment spans residues Val7–Gln29. The Mitochondrial intermembrane segment spans residues Val30–Val115.

This sequence belongs to the COX16 family.

It is found in the mitochondrion inner membrane. Functionally, required for the assembly of the mitochondrial respiratory chain complex IV (CIV), also known as cytochrome c oxidase. The polypeptide is Cytochrome c oxidase assembly protein COX16 homolog, mitochondrial (Caenorhabditis elegans).